The following is a 624-amino-acid chain: Acidic juvenile hormone-suppressible protein 1 (624 aa).

A signal peptide spans 1–18 (MARLVLCALALLVAGGLA). Residues asparagine 75 and asparagine 478 are each glycosylated (N-linked (GlcNAc...) asparagine).

It belongs to the hemocyanin family.

Its subcellular location is the secreted. The protein resides in the extracellular space. The chain is Acidic juvenile hormone-suppressible protein 1 (AJSP-1) from Trichoplusia ni (Cabbage looper).